Reading from the N-terminus, the 393-residue chain is Formate-dependent phosphoribosylglycinamide formyltransferase (393 aa).

N(1)-(5-phospho-beta-D-ribosyl)glycinamide contacts are provided by residues 22–23 and Glu82; that span reads EL. ATP contacts are provided by residues Arg114, Lys155, 160 to 165, 195 to 198, and Glu203; these read SSGKGQ and EGFI. In terms of domain architecture, ATP-grasp spans 119 to 308; that stretch reads RLAAEELGLP…EFALHARAIL (190 aa). 2 residues coordinate Mg(2+): Glu267 and Glu279. Residues Asp286, Lys356, and 363–364 contribute to the N(1)-(5-phospho-beta-D-ribosyl)glycinamide site; that span reads RR.

The protein belongs to the PurK/PurT family. In terms of assembly, homodimer.

It catalyses the reaction N(1)-(5-phospho-beta-D-ribosyl)glycinamide + formate + ATP = N(2)-formyl-N(1)-(5-phospho-beta-D-ribosyl)glycinamide + ADP + phosphate + H(+). It participates in purine metabolism; IMP biosynthesis via de novo pathway; N(2)-formyl-N(1)-(5-phospho-D-ribosyl)glycinamide from N(1)-(5-phospho-D-ribosyl)glycinamide (formate route): step 1/1. Its function is as follows. Involved in the de novo purine biosynthesis. Catalyzes the transfer of formate to 5-phospho-ribosyl-glycinamide (GAR), producing 5-phospho-ribosyl-N-formylglycinamide (FGAR). Formate is provided by PurU via hydrolysis of 10-formyl-tetrahydrofolate. The chain is Formate-dependent phosphoribosylglycinamide formyltransferase from Stutzerimonas stutzeri (strain A1501) (Pseudomonas stutzeri).